The primary structure comprises 351 residues: Formyl peptide receptor 2 (351 aa).

The Extracellular segment spans residues 1–29; the sequence is MESNYSIHLNGSEVVVYDSTISRVLWILS. Residues Asn4 and Asn10 are each glycosylated (N-linked (GlcNAc...) asparagine). A helical transmembrane segment spans residues 30–50; it reads MVVVSITFFLGVLGNGLVIWV. Over 51-61 the chain is Cytoplasmic; the sequence is AGFRMPHTVTT. A helical membrane pass occupies residues 62 to 82; the sequence is IWYLNLALADFSFTATLPFLL. Residues 83–99 lie on the Extracellular side of the membrane; that stretch reads VEMAMKEKWPFGWFLCK. Cys98 and Cys176 are joined by a disulfide. A helical transmembrane segment spans residues 100-120; sequence LVHIVVDVNLFGSVFLIALIA. The Cytoplasmic portion of the chain corresponds to 121-144; that stretch reads LDRCICVLHPVWAQNHRTVSLARK. The chain crosses the membrane as a helical span at residues 145–165; it reads VVVGPWIFALILTLPIFIFLT. At 166–205 the chain is on the extracellular side; it reads TVRIPGGDVYCTFNFGSWAQTDEEKLNTAITFVTTRGIIR. A helical membrane pass occupies residues 206-226; that stretch reads FLIGFSMPMSIVAVCYGLIAV. Residues 227–241 lie on the Cytoplasmic side of the membrane; sequence KINRRNLVNSSRPLR. The chain crosses the membrane as a helical span at residues 242 to 262; that stretch reads VLTAVVASFFICWFPFQLVAL. Residues 263 to 282 lie on the Extracellular side of the membrane; the sequence is LGTVWFKETLLSGSYKILDM. Residues 283–305 form a helical membrane-spanning segment; the sequence is FVNPTSSLAYFNSCLNPMLYVFM. At 306–351 the chain is on the cytoplasmic side; the sequence is GQDFRERFIHSLPYSLERALSEDSGQTSDSSTSSTSPPADIELKAP. The disordered stretch occupies residues 325–351; the sequence is LSEDSGQTSDSSTSSTSPPADIELKAP. The segment covering 327 to 341 has biased composition (low complexity); the sequence is EDSGQTSDSSTSSTS.

Belongs to the G-protein coupled receptor 1 family. As to quaternary structure, interacts with Amyloid-beta protein 42, product of APP; the interaction takes place at the cell surface and the complex is then rapidly internalized. In terms of tissue distribution, primarily expressed in neutrophils. Not detected in vomeronasal neurons.

The protein resides in the cell membrane. Functionally, high affinity receptor for N-formyl-methionyl peptides (FMLP), which are powerful neutrophil chemotactic factors. Stimulates chemotaxis in immune cells to site of infection or tissue damage upon recognition of several ligands, such as FMLP, or ligand involved in cell damage, disease or inflammation. Receptor for the chemokine-like protein FAM19A5, mediating FAM19A5-stimulated macrophage chemotaxis and the inhibitory effect on TNFSF11/RANKL-induced osteoclast differentiation. This chain is Formyl peptide receptor 2 (Fpr2), found in Mus musculus (Mouse).